A 177-amino-acid chain; its full sequence is ATP synthase subunit delta (177 aa).

The protein belongs to the ATPase delta chain family. As to quaternary structure, F-type ATPases have 2 components, F(1) - the catalytic core - and F(0) - the membrane proton channel. F(1) has five subunits: alpha(3), beta(3), gamma(1), delta(1), epsilon(1). F(0) has three main subunits: a(1), b(2) and c(10-14). The alpha and beta chains form an alternating ring which encloses part of the gamma chain. F(1) is attached to F(0) by a central stalk formed by the gamma and epsilon chains, while a peripheral stalk is formed by the delta and b chains.

It is found in the cell inner membrane. Its function is as follows. F(1)F(0) ATP synthase produces ATP from ADP in the presence of a proton or sodium gradient. F-type ATPases consist of two structural domains, F(1) containing the extramembraneous catalytic core and F(0) containing the membrane proton channel, linked together by a central stalk and a peripheral stalk. During catalysis, ATP synthesis in the catalytic domain of F(1) is coupled via a rotary mechanism of the central stalk subunits to proton translocation. In terms of biological role, this protein is part of the stalk that links CF(0) to CF(1). It either transmits conformational changes from CF(0) to CF(1) or is implicated in proton conduction. The chain is ATP synthase subunit delta from Herminiimonas arsenicoxydans.